We begin with the raw amino-acid sequence, 423 residues long: Imidazolonepropionase (423 aa).

Residues His78 and His80 each coordinate Fe(3+). The Zn(2+) site is built by His78 and His80. Residues Arg87, Tyr150, and His183 each coordinate 4-imidazolone-5-propanoate. Tyr150 is a binding site for N-formimidoyl-L-glutamate. His247 contacts Fe(3+). His247 contributes to the Zn(2+) binding site. Glu250 provides a ligand contact to 4-imidazolone-5-propanoate. Asp322 serves as a coordination point for Fe(3+). Asp322 provides a ligand contact to Zn(2+). Positions 324 and 326 each coordinate N-formimidoyl-L-glutamate. Ser327 contributes to the 4-imidazolone-5-propanoate binding site.

It belongs to the metallo-dependent hydrolases superfamily. HutI family. Requires Zn(2+) as cofactor. The cofactor is Fe(3+).

It localises to the cytoplasm. The enzyme catalyses 4-imidazolone-5-propanoate + H2O = N-formimidoyl-L-glutamate. Its pathway is amino-acid degradation; L-histidine degradation into L-glutamate; N-formimidoyl-L-glutamate from L-histidine: step 3/3. In terms of biological role, catalyzes the hydrolytic cleavage of the carbon-nitrogen bond in imidazolone-5-propanoate to yield N-formimidoyl-L-glutamate. It is the third step in the universal histidine degradation pathway. This is Imidazolonepropionase from Bacillus cereus (strain ATCC 14579 / DSM 31 / CCUG 7414 / JCM 2152 / NBRC 15305 / NCIMB 9373 / NCTC 2599 / NRRL B-3711).